The primary structure comprises 147 residues: Hemoglobin subunit beta (147 aa).

The 145-residue stretch at 3–147 (HWTAEEKQLI…VAHALARKYH (145 aa)) folds into the Globin domain. Heme b is bound by residues histidine 64 and histidine 93.

It belongs to the globin family. In terms of assembly, heterotetramer of 2 alpha (or alpha-D) and 2 beta chains. In terms of tissue distribution, red blood cells.

Functionally, involved in oxygen transport from the lung to the various peripheral tissues. The beta chain is a component of adult hemoglobin A and D. This is Hemoglobin subunit beta (HBB) from Gallus gallus (Chicken).